The chain runs to 264 residues: Wtf element wtf11 (264 aa).

Polar residues predominate over residues 1–12 (MNSNYVPLTSSV). The segment at 1–26 (MNSNYVPLTSSVDVEEKMESENGVDL) is disordered. Helical transmembrane passes span 107 to 127 (LLFV…VIFG), 145 to 165 (LSWF…YDFW), 180 to 200 (WKNT…GFFV), and 217 to 237 (SLFA…FETL).

This sequence belongs to the WTF family.

It is found in the membrane. Its function is as follows. May act in meiotic drive. This is Wtf element wtf11 from Schizosaccharomyces pombe (strain 972 / ATCC 24843) (Fission yeast).